Here is a 106-residue protein sequence, read N- to C-terminus: NADH-quinone oxidoreductase subunit K (106 aa).

Transmembrane regions (helical) follow at residues 9–29 (LGHYLAVAAVLLVLGIFGIFL), 35–55 (IVMLMSIELILLAVNLNMVAF), and 70–90 (FILTVAAAEAAIGLAILVIYF).

The protein belongs to the complex I subunit 4L family. NDH-1 is composed of 14 different subunits. Subunits NuoA, H, J, K, L, M, N constitute the membrane sector of the complex.

The protein resides in the cell inner membrane. The catalysed reaction is a quinone + NADH + 5 H(+)(in) = a quinol + NAD(+) + 4 H(+)(out). Functionally, NDH-1 shuttles electrons from NADH, via FMN and iron-sulfur (Fe-S) centers, to quinones in the respiratory chain. The immediate electron acceptor for the enzyme in this species is believed to be ubiquinone. Couples the redox reaction to proton translocation (for every two electrons transferred, four hydrogen ions are translocated across the cytoplasmic membrane), and thus conserves the redox energy in a proton gradient. The sequence is that of NADH-quinone oxidoreductase subunit K from Granulibacter bethesdensis (strain ATCC BAA-1260 / CGDNIH1).